The primary structure comprises 415 residues: Mitogen-activated protein kinase mpkC (415 aa).

Positions 20 to 299 (YANLQPVGLG…AEQGLMHPWM (280 aa)) constitute a Protein kinase domain. ATP contacts are provided by residues 26–34 (VGLGTAGVV) and Lys-49. Asp-141 acts as the Proton acceptor in catalysis. Thr-171 carries the phosphothreonine modification. The TXY motif lies at 171–173 (TGY). Residue Tyr-173 is modified to Phosphotyrosine.

It belongs to the protein kinase superfamily. Ser/Thr protein kinase family. MAP kinase subfamily. HOG1 sub-subfamily. Mg(2+) serves as cofactor. Post-translationally, dually phosphorylated on Thr-171 and Tyr-173, which activates the enzyme.

The catalysed reaction is L-seryl-[protein] + ATP = O-phospho-L-seryl-[protein] + ADP + H(+). It catalyses the reaction L-threonyl-[protein] + ATP = O-phospho-L-threonyl-[protein] + ADP + H(+). Its activity is regulated as follows. Activated by tyrosine and threonine phosphorylation. Mitogen-activated protein kinase required for growth on media where sorbitol or mannitol is the sole carbon source. In Emericella nidulans (strain FGSC A4 / ATCC 38163 / CBS 112.46 / NRRL 194 / M139) (Aspergillus nidulans), this protein is Mitogen-activated protein kinase mpkC (mpkC).